The primary structure comprises 141 residues: MAKKVVEVLKLQIPAGKANPSPPVGPALGQRGINIMEFCKAFNEKTKDMMGFTIPVEITVFSDRSFTFITKQPPATDLLKKAAGIQKGSSNPLKDKVGKITKAQLKEVAEKKLPDLNTDDIEQAMKILAGSARSMGIEIVD.

The protein belongs to the universal ribosomal protein uL11 family. Part of the ribosomal stalk of the 50S ribosomal subunit. Interacts with L10 and the large rRNA to form the base of the stalk. L10 forms an elongated spine to which L12 dimers bind in a sequential fashion forming a multimeric L10(L12)X complex. Post-translationally, one or more lysine residues are methylated.

In terms of biological role, forms part of the ribosomal stalk which helps the ribosome interact with GTP-bound translation factors. This Nautilia profundicola (strain ATCC BAA-1463 / DSM 18972 / AmH) protein is Large ribosomal subunit protein uL11.